The primary structure comprises 592 residues: Putative amidase ARB_02965 (592 aa).

The signal sequence occupies residues 1–21 (MKGPITFLLQLGAVYTSIASA). Residue asparagine 120 is glycosylated (N-linked (GlcNAc...) asparagine). Residue lysine 161 is the Charge relay system of the active site. Asparagine 217 is a glycosylation site (N-linked (GlcNAc...) asparagine). Serine 242 functions as the Charge relay system in the catalytic mechanism. Substrate contacts are provided by residues serine 242 and 263–266 (TSGS). Serine 266 (acyl-ester intermediate) is an active-site residue. Residues asparagine 326, asparagine 430, and asparagine 528 are each glycosylated (N-linked (GlcNAc...) asparagine).

It belongs to the amidase family.

The protein localises to the secreted. The polypeptide is Putative amidase ARB_02965 (Arthroderma benhamiae (strain ATCC MYA-4681 / CBS 112371) (Trichophyton mentagrophytes)).